A 284-amino-acid chain; its full sequence is L-ribulose-5-phosphate 3-epimerase UlaE (284 aa).

The protein belongs to the L-ribulose-5-phosphate 3-epimerase family.

It carries out the reaction L-ribulose 5-phosphate = L-xylulose 5-phosphate. It participates in cofactor degradation; L-ascorbate degradation; D-xylulose 5-phosphate from L-ascorbate: step 3/4. Catalyzes the isomerization of L-xylulose-5-phosphate to L-ribulose-5-phosphate. Is involved in the anaerobic L-ascorbate utilization. This is L-ribulose-5-phosphate 3-epimerase UlaE from Escherichia coli (strain SMS-3-5 / SECEC).